The primary structure comprises 151 residues: uncharacterized protein (151 aa).

The next 3 membrane-spanning stretches (helical) occupy residues 12–32 (LAYFIDGIIVSVPSYIILFII), 59–79 (LAFLPTMLIMIVISVLYYGLL), and 114–134 (YFAYILSGIIFYIGFIMIAFG).

The protein resides in the cell membrane. This is an uncharacterized protein from Bacillus subtilis (strain 168).